A 269-amino-acid chain; its full sequence is Glutamate racemase (269 aa).

Substrate-binding positions include 11–12 (DS) and 43–44 (YG). The Proton donor/acceptor role is filled by Cys74. 75 to 76 (NT) lines the substrate pocket. The Proton donor/acceptor role is filled by Cys185. 186–187 (TH) serves as a coordination point for substrate.

The protein belongs to the aspartate/glutamate racemases family.

The catalysed reaction is L-glutamate = D-glutamate. The protein operates within cell wall biogenesis; peptidoglycan biosynthesis. In terms of biological role, provides the (R)-glutamate required for cell wall biosynthesis. The protein is Glutamate racemase of Bacillus cereus (strain G9842).